The sequence spans 307 residues: O-acetylserine dependent cystathionine beta-synthase (307 aa).

The residue at position 44 (Lys44) is an N6-(pyridoxal phosphate)lysine. Residues Asn74, 178–182, and Ser265 contribute to the pyridoxal 5'-phosphate site; that span reads GSGGT.

The protein belongs to the cysteine synthase/cystathionine beta-synthase family. Requires pyridoxal 5'-phosphate as cofactor.

The enzyme catalyses O-acetyl-L-serine + L-homocysteine = L,L-cystathionine + acetate + H(+). Functionally, catalyzes the conversion of O-acetylserine and homocysteine to cystathionine. The polypeptide is O-acetylserine dependent cystathionine beta-synthase (mccA) (Bacillus subtilis (strain 168)).